The sequence spans 161 residues: Crossover junction endodeoxyribonuclease RuvC (161 aa).

Catalysis depends on residues D9, E69, and H144. Mg(2+) is bound by residues D9, E69, and H144.

It belongs to the RuvC family. In terms of assembly, homodimer which binds Holliday junction (HJ) DNA. The HJ becomes 2-fold symmetrical on binding to RuvC with unstacked arms; it has a different conformation from HJ DNA in complex with RuvA. In the full resolvosome a probable DNA-RuvA(4)-RuvB(12)-RuvC(2) complex forms which resolves the HJ. It depends on Mg(2+) as a cofactor.

It is found in the cytoplasm. The catalysed reaction is Endonucleolytic cleavage at a junction such as a reciprocal single-stranded crossover between two homologous DNA duplexes (Holliday junction).. Its function is as follows. The RuvA-RuvB-RuvC complex processes Holliday junction (HJ) DNA during genetic recombination and DNA repair. Endonuclease that resolves HJ intermediates. Cleaves cruciform DNA by making single-stranded nicks across the HJ at symmetrical positions within the homologous arms, yielding a 5'-phosphate and a 3'-hydroxyl group; requires a central core of homology in the junction. The consensus cleavage sequence is 5'-(A/T)TT(C/G)-3'. Cleavage occurs on the 3'-side of the TT dinucleotide at the point of strand exchange. HJ branch migration catalyzed by RuvA-RuvB allows RuvC to scan DNA until it finds its consensus sequence, where it cleaves and resolves the cruciform DNA. The polypeptide is Crossover junction endodeoxyribonuclease RuvC (Borrelia turicatae (strain 91E135)).